Here is a 140-residue protein sequence, read N- to C-terminus: Ctenidin-1 (140 aa).

The first 19 residues, M1 to A19, serve as a signal peptide directing secretion. Position 138 is a glycine amide (G138).

Belongs to the glycine-rich peptide family. Expressed in hemocytes (at protein level).

It is found in the secreted. Antimicrobial protein with bacteriostatic activity against the Gram-negative bacterium E.coli, and very weak activity against the Gram-positive bacterium S.aureus. Lacks activity against the yeast C.albicans. This is Ctenidin-1 from Cupiennius salei (American wandering spider).